The sequence spans 306 residues: Ankyrin repeat domain-containing protein 23 (306 aa).

Residues 41–90 (QEAVAREKLKLEEEKRKKLERFNSSRLTLDNLTDLENLVQRRRKKRQRHK) are a coiled coil. The segment at 78–107 (LVQRRRKKRQRHKVPPREPESGAEPQPQVP) is disordered. Over residues 80-91 (QRRRKKRQRHKV) the composition is skewed to basic residues. 4 ANK repeats span residues 144 to 173 (LHRT…AIEV), 177 to 206 (LDRT…QVNA), 210 to 239 (IWST…HINA), and 243 to 272 (EGDT…KLGV). The interval 179–196 (RTPVFWACRGGHLDILKR) is interaction with TTN.

In terms of assembly, interacts with titin/TTN and MYPN.

The protein localises to the nucleus. In terms of biological role, may be involved in the energy metabolism. Could be a molecular link between myofibrillar stretch-induced signaling pathways and muscle gene expression. The protein is Ankyrin repeat domain-containing protein 23 (Ankrd23) of Mus musculus (Mouse).